We begin with the raw amino-acid sequence, 382 residues long: Putative glutamate--cysteine ligase 2-1 (382 aa).

It belongs to the glutamate--cysteine ligase type 2 family. YbdK subfamily.

The enzyme catalyses L-cysteine + L-glutamate + ATP = gamma-L-glutamyl-L-cysteine + ADP + phosphate + H(+). In terms of biological role, ATP-dependent carboxylate-amine ligase which exhibits weak glutamate--cysteine ligase activity. The polypeptide is Putative glutamate--cysteine ligase 2-1 (Frankia casuarinae (strain DSM 45818 / CECT 9043 / HFP020203 / CcI3)).